Consider the following 777-residue polypeptide: Glucocorticoid receptor (777 aa).

Residues 1 to 14 show a composition bias toward basic and acidic residues; that stretch reads MDSKESLTPGKEEN. Residues 1–21 form a disordered region; the sequence is MDSKESLTPGKEENPSSVLTQ. Positions 1-420 are modulating; the sequence is MDSKESLTPG…TATTGPPPKL (420 aa). Residue Thr-8 is modified to Phosphothreonine. Arg-23 is subject to Omega-N-methylarginine. Ser-45, Ser-113, Ser-134, and Ser-141 each carry phosphoserine. Positions 130-182 are disordered; sequence NRSTSVPENPKSSASSSVSAAPKEKEFPKTHSDVSSEQQNLKGQTGTNGGNVK. The segment covering 134 to 150 has biased composition (low complexity); that stretch reads SVPENPKSSASSSVSAA. The span at 151-163 shows a compositional bias: basic and acidic residues; sequence PKEKEFPKTHSDV. Residues 164–174 show a composition bias toward polar residues; that stretch reads SSEQQNLKGQT. Phosphoserine is present on residues Ser-203, Ser-211, and Ser-226. Residue Lys-258 forms a Glycyl lysine isopeptide (Lys-Gly) (interchain with G-Cter in SUMO2) linkage. A Phosphoserine modification is found at Ser-267. Residues Lys-277 and Lys-293 each participate in a glycyl lysine isopeptide (Lys-Gly) (interchain with G-Cter in SUMO); alternate cross-link. Glycyl lysine isopeptide (Lys-Gly) (interchain with G-Cter in SUMO2); alternate cross-links involve residues Lys-277 and Lys-293. Over residues 394–414 the composition is skewed to low complexity; that stretch reads SSPSMRPDVSSPPSSSSTATT. Residues 394 to 415 form a disordered region; that stretch reads SSPSMRPDVSSPPSSSSTATTG. Residue Ser-404 is modified to Phosphoserine. Lys-419 participates in a covalent cross-link: Glycyl lysine isopeptide (Lys-Gly) (interchain with G-Cter in ubiquitin). 2 NR C4-type zinc fingers span residues 421 to 441 and 457 to 481; these read CLVCSDEASGCHYGVLTCGSC and CAGRNDCIIDKIRRKNCPACRYRKC. The segment at residues 421–486 is a DNA-binding region (nuclear receptor); sequence CLVCSDEASG…RYRKCLQAGM (66 aa). 4 positions are modified to N6-acetyllysine: Lys-480, Lys-492, Lys-494, and Lys-495. The interaction with CLOCK stretch occupies residues 485-777; sequence GMNLEARKTK…NIKKLLFHQK (293 aa). The tract at residues 487–523 is hinge; the sequence is NLEARKTKKKIKGIQQATTGVSQETSENPANKTIVPA. The NR LBD domain occupies 524-758; it reads TLPQLTPTLV…FPEMLAEIIT (235 aa). The tract at residues 532–697 is interaction with CRY1; sequence LVSLLEVIEP…EIRMTYIKEL (166 aa). Lys-703 participates in a covalent cross-link: Glycyl lysine isopeptide (Lys-Gly) (interchain with G-Cter in SUMO).

Belongs to the nuclear hormone receptor family. NR3 subfamily. In terms of assembly, heteromultimeric cytoplasmic complex with HSP90AA1, HSPA1A/HSPA1B, and FKBP5 or another immunophilin such as PPID, STIP1, or the immunophilin homolog PPP5C. Upon ligand binding FKBP5 dissociates from the complex and FKBP4 takes its place, thereby linking the complex to dynein and mediating transport to the nucleus, where the complex dissociates. Probably forms a complex composed of chaperones HSP90 and HSP70, co-chaperones CDC37, PPP5C, TSC1 and client protein TSC2, CDK4, AKT, RAF1 and NR3C1; this complex does not contain co-chaperones STIP1/HOP and PTGES3/p23. Directly interacts with UNC45A. Binds to DNA as a homodimer, and as heterodimer with NR3C2 or the retinoid X receptor. Binds STAT5A and STAT5B homodimers and heterodimers. Interacts with NRIP1, POU2F1, POU2F2 and TRIM28. Interacts with several coactivator complexes, including the SMARCA4 complex, CREBBP/EP300, TADA2L (Ada complex) and p160 coactivators such as NCOA2 and NCOA6. Interaction with BAG1 inhibits transactivation. Interacts with HEXIM1 and TGFB1I1. Interacts with NCOA1. Interacts with NCOA3, SMARCA4, SMARCC1, SMARCD1, and SMARCE1. Interacts with CLOCK, CRY1 and CRY2 in a ligand-dependent fashion. Interacts with CIART. Interacts with RWDD3. Interacts with UBE2I/UBC9 and this interaction is enhanced in the presence of RWDD3. Interacts with GRIP1. Interacts with NR4A3 (via nuclear receptor DNA-binding domain), represses transcription activity of NR4A3 on the POMC promoter Nur response element (NurRE). Directly interacts with PNRC2 to attract and form a complex with UPF1 and DCP1A; the interaction leads to rapid mRNA degradation. Interacts with GSK3B. Interacts with FNIP1 and FNIP2. Interacts (via C-terminus) with HNRNPU (via C-terminus). Interacts with MCM3AP. Interacts (via domain NR LBD) with HSP90AA1 and HSP90AB1. In the absence of hormonal ligand, interacts with TACC1. Interacts (via NR LBD domain) with ZNF764 (via KRAB domain); the interaction regulates transcription factor activity of NR3C1 by directing its actions toward certain biologic pathways. In terms of processing, acetylation by CLOCK reduces its binding to glucocorticoid response elements and its transcriptional activity. Increased proteasome-mediated degradation in response to glucocorticoids. Post-translationally, phosphorylated in the absence of hormone; becomes hyperphosphorylated in the presence of glucocorticoid. The Ser-203, Ser-226 and Ser-404-phosphorylated forms are mainly cytoplasmic, and the Ser-211-phosphorylated form is nuclear. Phosphorylation at Ser-211 increases transcriptional activity. Phosphorylation at Ser-203, Ser-226 and Ser-404 decreases signaling capacity. Phosphorylation at Ser-404 may protect from glucocorticoid-induced apoptosis. Phosphorylation at Ser-203 and Ser-211 is not required in regulation of chromosome segregation. May be dephosphorylated by PPP5C, attenuates NR3C1 action. In terms of processing, ubiquitinated by UBR5, leading to its degradation: UBR5 specifically recognizes and binds ligand-bound NR3C1 when it is not associated with coactivators (NCOAs). In presence of NCOAs, the UBR5-degron is not accessible, preventing its ubiquitination and degradation. Sumoylation at Lys-277 and Lys-293 negatively regulates its transcriptional activity. Sumoylation at Lys-703 positively regulates its transcriptional activity in the presence of RWDD3. Sumoylation at Lys-277 and Lys-293 is dispensable whereas sumoylation at Lys-703 is critical for the stimulatory effect of RWDD3 on its transcriptional activity. Heat shock increases sumoylation in a RWDD3-dependent manner. As to expression, within the infant and adult hippocampal formation, highest expression observed in the DG granule cell layer with moderate levels in the DG hilus, the CA2-CA4 pyramidal cell layer and the proximal part of the CA1 pyramidal cell layer. Moderate to high expression levels found in the presubiculum and in its' superficial layers. Weak but specific expression detected throughout the entire corticle mantle. In the amygdala, moderate levels were detected in the lateral, central and medial nuclei. Moderate expression levels were present in the PVNh alongside the third ventricle.

It is found in the cytoplasm. It localises to the nucleus. The protein localises to the mitochondrion. Its subcellular location is the cytoskeleton. The protein resides in the spindle. It is found in the microtubule organizing center. It localises to the centrosome. The protein localises to the chromosome. Its subcellular location is the nucleoplasm. In terms of biological role, receptor for glucocorticoids (GC). Has a dual mode of action: as a transcription factor that binds to glucocorticoid response elements (GRE), both for nuclear and mitochondrial DNA, and as a modulator of other transcription factors. Affects inflammatory responses, cellular proliferation and differentiation in target tissues. Involved in chromatin remodeling. Plays a role in rapid mRNA degradation by binding to the 5' UTR of target mRNAs and interacting with PNRC2 in a ligand-dependent manner which recruits the RNA helicase UPF1 and the mRNA-decapping enzyme DCP1A, leading to RNA decay. Could act as a coactivator for STAT5-dependent transcription upon growth hormone (GH) stimulation and could reveal an essential role of hepatic GR in the control of body growth. Mediates glucocorticoid-induced apoptosis. Promotes accurate chromosome segregation during mitosis. May act as a tumor suppressor. May play a negative role in adipogenesis through the regulation of lipolytic and antilipogenic gene expression. In Callithrix jacchus (White-tufted-ear marmoset), this protein is Glucocorticoid receptor (NR3C1).